A 539-amino-acid chain; its full sequence is MNFQIADFTRLIPEFLLLAIAAMVLLGDVLTRWSKGKEALNDRTEEAISMTLMGLGLAFVMVLIQGGFFSWMQFGDWKFYDFSIFQNLRSSGLDGSILGGAFVVDPLTHIGRLVFIGAAFVTVILTSKAKPSNNPAEFYALILFATLGMIFMTAGGELIMIYLGIELTSIPLYVLAGYFRRNPVSTEAGAKYYIFGALSSAILLFGMSLLLGLTLMNGQTMTTTPTSLRSVATAVELAFANPEGPSQGVAILALLFILAGMAYKVAIVPFHAWSPDVYQGAPTSMTAFISTASKTAGFFLLYRVLVTGFGAPSILGTAAIGTSTSFGGWTSLIAILAALTMLVGNLAALPQTNAKRMLAYSSIAQAGFLMLGLVGTQRDSGISLLMYLIAYTVTNLSAFGILALVEDAVGGTDFSNLNGLGRRAPGLALLLTVAILSLAGIPPLSGFFVKFYVFIAAWQEGAKWLVIFAVSNTVISLYYYLRFLKAVYFAPAETDEPIKVGFGPGIVMTAITLLIFGLGIVPTWLYGVLEQATIRIAAQ.

A run of 13 helical transmembrane segments spans residues 11-31 (LIPE…DVLT), 52-72 (LMGL…FSWM), 106-126 (PLTH…VILT), 141-161 (LILF…LIMI), 193-213 (YIFG…LLGL), 248-268 (GVAI…VAIV), 296-316 (AGFF…SILG), 329-349 (WTSL…LAAL), 357-377 (MLAY…VGTQ), 385-405 (LMYL…LALV), 429-449 (LLLT…GFFV), 462-484 (AKWL…LRFL), and 500-520 (VGFG…GLGI).

Belongs to the complex I subunit 2 family. In terms of assembly, NDH-1 is composed of 14 different subunits. Subunits NuoA, H, J, K, L, M, N constitute the membrane sector of the complex.

It localises to the cell membrane. The enzyme catalyses a quinone + NADH + 5 H(+)(in) = a quinol + NAD(+) + 4 H(+)(out). In terms of biological role, NDH-1 shuttles electrons from NADH, via FMN and iron-sulfur (Fe-S) centers, to quinones in the respiratory chain. The immediate electron acceptor for the enzyme in this species is believed to be ubiquinone. Couples the redox reaction to proton translocation (for every two electrons transferred, four hydrogen ions are translocated across the cytoplasmic membrane), and thus conserves the redox energy in a proton gradient. This chain is NADH-quinone oxidoreductase subunit N 2, found in Herpetosiphon aurantiacus (strain ATCC 23779 / DSM 785 / 114-95).